We begin with the raw amino-acid sequence, 291 residues long: MEKNSSLWKSLVTEHPLCTTWKQEAEGAIYHLASILFVVGFMGGSGFFGLLYVFSLLGLGFLSSAVWAWVDICAADIFSWNFVLFVICFMQFVHIAYQVHSITFARDFHVLYSSLFKPLGIPLPVFRTIALSSEVVSLEKEHCYAMQGKTSIDRLSVLISGRIRVTVDGEFLHYISPFQFLDSPEWDSLRPTEEGIFQVTLTADTDCRYVSWRRKKLYLLFAQHRYISRLFSVLIGSDIADKLYALNDRVYIGKKHHYDIRLPNYYHMSTPDLSRSPLTEQFRNSRQHCNK.

Asn4 carries N-linked (GlcNAc...) asparagine glycosylation. The next 3 helical transmembrane spans lie at 27 to 44 (GAIY…FMGG), 48 to 70 (FGLL…WAWV), and 77 to 99 (IFSW…AYQV).

This sequence belongs to the popeye family. In terms of tissue distribution, expressed in cardiac and skeletal muscle.

Its subcellular location is the membrane. In terms of biological role, may play a role in the maintenance of heart function mediated, at least in part, through cAMP-binding. May play a role in the regulation of KCNK2-mediated current amplitude. The sequence is that of Popeye domain-containing protein 3 (Popdc3) from Mus musculus (Mouse).